We begin with the raw amino-acid sequence, 362 residues long: Probable dual-specificity RNA methyltransferase RlmN (362 aa).

Glu105 serves as the catalytic Proton acceptor. One can recognise a Radical SAM core domain in the interval 111 to 344 (HEYGNSICVT…VTIRREQGHD (234 aa)). A disulfide bridge links Cys118 with Cys349. Residues Cys125, Cys129, and Cys132 each coordinate [4Fe-4S] cluster. Residues 175-176 (GE), Ser207, 230-232 (SLH), and Asn306 each bind S-adenosyl-L-methionine. Residue Cys349 is the S-methylcysteine intermediate of the active site.

This sequence belongs to the radical SAM superfamily. RlmN family. It depends on [4Fe-4S] cluster as a cofactor.

Its subcellular location is the cytoplasm. It catalyses the reaction adenosine(2503) in 23S rRNA + 2 reduced [2Fe-2S]-[ferredoxin] + 2 S-adenosyl-L-methionine = 2-methyladenosine(2503) in 23S rRNA + 5'-deoxyadenosine + L-methionine + 2 oxidized [2Fe-2S]-[ferredoxin] + S-adenosyl-L-homocysteine. It carries out the reaction adenosine(37) in tRNA + 2 reduced [2Fe-2S]-[ferredoxin] + 2 S-adenosyl-L-methionine = 2-methyladenosine(37) in tRNA + 5'-deoxyadenosine + L-methionine + 2 oxidized [2Fe-2S]-[ferredoxin] + S-adenosyl-L-homocysteine. In terms of biological role, specifically methylates position 2 of adenine 2503 in 23S rRNA and position 2 of adenine 37 in tRNAs. The sequence is that of Probable dual-specificity RNA methyltransferase RlmN from Bacillus anthracis (strain A0248).